A 418-amino-acid polypeptide reads, in one-letter code: Major capsid protein (418 aa).

Multimerizes.

Its subcellular location is the virion. The most highly expressed virion protein; probably the major capsid protein. The sequence is that of Major capsid protein from Pseudomonas phage PaMx41.